The following is a 208-amino-acid chain: Guanylate kinase (208 aa).

Residues 5–184 form the Guanylate kinase-like domain; sequence GLLIVFSGPS…AAERVKCVIE (180 aa). 12-19 contacts ATP; that stretch reads GPSGVGKG.

The protein belongs to the guanylate kinase family.

Its subcellular location is the cytoplasm. It carries out the reaction GMP + ATP = GDP + ADP. Its function is as follows. Essential for recycling GMP and indirectly, cGMP. This chain is Guanylate kinase, found in Streptococcus pneumoniae serotype 4 (strain ATCC BAA-334 / TIGR4).